The sequence spans 340 residues: Phenylalanine--tRNA ligase alpha subunit (340 aa).

Position 255 (glutamate 255) interacts with Mg(2+).

The protein belongs to the class-II aminoacyl-tRNA synthetase family. Phe-tRNA synthetase alpha subunit type 1 subfamily. As to quaternary structure, tetramer of two alpha and two beta subunits. It depends on Mg(2+) as a cofactor.

It is found in the cytoplasm. It catalyses the reaction tRNA(Phe) + L-phenylalanine + ATP = L-phenylalanyl-tRNA(Phe) + AMP + diphosphate + H(+). This is Phenylalanine--tRNA ligase alpha subunit from Syntrophomonas wolfei subsp. wolfei (strain DSM 2245B / Goettingen).